Here is a 209-residue protein sequence, read N- to C-terminus: FMN-dependent NADH:quinone oxidoreductase 2 (209 aa).

17–19 contacts FMN; sequence SAS.

It belongs to the azoreductase type 1 family. Homodimer. FMN is required as a cofactor.

It catalyses the reaction 2 a quinone + NADH + H(+) = 2 a 1,4-benzosemiquinone + NAD(+). The catalysed reaction is N,N-dimethyl-1,4-phenylenediamine + anthranilate + 2 NAD(+) = 2-(4-dimethylaminophenyl)diazenylbenzoate + 2 NADH + 2 H(+). Functionally, quinone reductase that provides resistance to thiol-specific stress caused by electrophilic quinones. Also exhibits azoreductase activity. Catalyzes the reductive cleavage of the azo bond in aromatic azo compounds to the corresponding amines. This is FMN-dependent NADH:quinone oxidoreductase 2 from Lactiplantibacillus plantarum (strain ATCC BAA-793 / NCIMB 8826 / WCFS1) (Lactobacillus plantarum).